The chain runs to 316 residues: MKELVVVAIGGNSIIKDNASQSIEHQAEAVKAVADTVLEMLASDYDIVLTHGNGPQVGLDLRRAEIAHKREGLPLTPLANCVADTQGGIGYLIQQALNNRLARHGEKKAVTVVTQVEVDKNDPGFAHPTKPIGAFFSDSQRDELQKANPDWCFVEDAGRGYRRVVASPEPKRIVEAPAIKALIQQGFVVIGAGGGGIPVVRTDAGDYQSVDAVIDKDLSTALLAREIHADILVITTGVEKVCIHFGKPQQQALDRVDIATMTRYMQEGHFPPGSMLPKIIASLTFLEQGGKEVIITTPECLPAALRGETGTHIIKT.

It belongs to the carbamate kinase family.

The sequence is that of Carbamate kinase-like protein YahI (yahI) from Escherichia coli (strain K12).